A 1037-amino-acid chain; its full sequence is Protein brain tumor (1037 aa).

Disordered regions lie at residues 29-63 (SDSPLTLSGSSPPASDSAICSDEYTGGSSVKSRSE) and 159-178 (SNSSSNSSSSNTSANGSPPR). 2 stretches are compositionally biased toward polar residues: residues 31 to 42 (SPLTLSGSSPPA) and 54 to 63 (GGSSVKSRSE). Residues 159-175 (SNSSSNSSSSNTSANGS) show a composition bias toward low complexity. The B box-type 1; atypical zinc finger occupies 174-222 (GSPPRCTACKSKCSDAVAKCFECQSYLCANCVTAHEFMHCFNGHNVCLI). Residues cysteine 179, cysteine 182, cysteine 204, histidine 208, cysteine 328, histidine 331, cysteine 351, and histidine 356 each contribute to the Zn(2+) site. The segment at 323–366 (QRQLFCPRHKQELLKFSCRTCCILVCKECIVLEHSTGLHELENV) adopts a B box-type 2 zinc-finger fold. Residues 543–554 (GPTGMSLTSNGH) show a composition bias toward polar residues. The interval 543–606 (GPTGMSLTSN…TAHHQQLQAQ (64 aa)) is disordered. Over residues 565-577 (QSASNSSASSAGS) the composition is skewed to low complexity. Residues 579–598 (HHGHHQQSHHHGHHNHHQTA) show a composition bias toward basic residues. NHL repeat units lie at residues 767–810 (HCKF…FDKE), 814–859 (KFQF…YNQY), 860–901 (GQFV…FDQN), 902–944 (GNVL…FNYE), and 945–988 (GQYL…FTQD).

Interacts with nanos (nos) and pum. Acts via the formation of a quaternary complex composed of pum, nanos, brat and the 3'-UTR mRNA of hb. Not recruited by nanos and pum to cyclin B 3'-UTR mRNA. Might interact with mira; the interaction seems to be important for brat localization during mitosis. Interacts with Ago1. As to expression, expressed during embryogenesis, mainly in nervous tissues. Expressed in the embryonic central and peripheral nervous systems including the embryonic brain. In third instar larva it is expressed in the larval central nervous system including the brain and the ventral ganglion, in two glands (the ring gland and the salivary gland, and in parts of the foregut) the gastric caeca and the proventriculus.

The protein resides in the cytoplasm. It is found in the cell cortex. Its function is as follows. An NHL-domain family protein that functions as a translational repressor to inhibit cell proliferation. Plays a central role in translation repression of hb mRNA by being recruited by nanos (nos) and pum to the Nanos Response Element (NRE), a 16 bp sequence in the hb mRNA 3'-UTR. Probably recruited by other proteins to repress translation of other mRNAs in other tissues. Negatively regulates expression of Myc in a 3'-UTR dependent manner in both neural progenitor and epithelial cells. Regulates expression of mei-P26, possibly at transcriptional level. Involved in the regulation of ribosomal RNA synthesis and cell growth. Participates in abdominal segmentation and imaginal disk development. During neuroblast division, segregates asymmetrically and inhibits self-renewal of one of the two daughter cells. Together with the asymmetrically segregating transcription factor prospero ensures that the daughter cell will stop growing, exit the cell cycle, and differentiate into neurons possibly by modulating the function of dm in ganglion mother cells (GMC). Restricts developmental potential of type II intermediary neuronal progenitor (INP) cells playing a role in proliferation and maturation of the neuroblasts. The chain is Protein brain tumor from Drosophila melanogaster (Fruit fly).